Reading from the N-terminus, the 217-residue chain is Putative cobalt transport protein CbiM (217 aa).

6 consecutive transmembrane segments (helical) span residues 8-28 (LPPE…VYGA), 44-64 (LIAV…PSVT), 74-94 (GIAV…IVLL), 107-127 (TLGA…WIAF), 139-161 (VFAA…LALA), and 181-201 (IFAV…VMLV).

This sequence belongs to the CbiM family. As to quaternary structure, forms an energy-coupling factor (ECF) transporter complex composed of an ATP-binding protein (A component, CbiO), a transmembrane protein (T component, CbiQ) and 2 possible substrate-capture proteins (S components, CbiM and CbiN) of unknown stoichimetry.

Its subcellular location is the cell membrane. It participates in cofactor biosynthesis; adenosylcobalamin biosynthesis. Functionally, part of the energy-coupling factor (ECF) transporter complex CbiMNOQ involved in cobalt import. The chain is Putative cobalt transport protein CbiM from Archaeoglobus fulgidus (strain ATCC 49558 / DSM 4304 / JCM 9628 / NBRC 100126 / VC-16).